Consider the following 307-residue polypeptide: Replication termination factor 2 (307 aa).

The disordered stretch occupies residues 193–296 (AKLEKKTKKP…SSAKRSKEES (104 aa)). The span at 227–241 (GKPEEADPDPREKKS) shows a compositional bias: basic and acidic residues. Serine 288 is modified (phosphoserine).

It belongs to the rtf2 family. In terms of assembly, interacts with DDI2; probably also interacts with DDI1. In terms of processing, undergoes proteasomal degradation, via DDI1 and DDI2. Removal from stalled replisomes and degradation are required for genome stability.

The protein localises to the chromosome. Replication termination factor which is a component of the elongating replisome. Required for ATR pathway signaling upon DNA damage and has a positive activity during DNA replication. Might function to facilitate fork pausing at replication fork barriers like the rDNA. May be globally required to stimulate ATR signaling after the fork stalls or encounters a lesion. Interacts with nascent DNA. The polypeptide is Replication termination factor 2 (Mus musculus (Mouse)).